Reading from the N-terminus, the 432-residue chain is N-acylneuraminate cytidylyltransferase (432 aa).

Substrate contacts are provided by arginine 39, asparagine 49, arginine 98, serine 107, serine 109, and glutamine 130. Residue arginine 188 is part of the active site.

Belongs to the CMP-NeuNAc synthase family. Homotetramer; the active enzyme is formed by a dimer of dimers. Expressed in testis, ovary and liver.

The protein localises to the nucleus. It catalyses the reaction an N-acylneuraminate + CTP = a CMP-N-acyl-beta-neuraminate + diphosphate. It functions in the pathway amino-sugar metabolism; N-acetylneuraminate metabolism. Its function is as follows. Catalyzes the activation of N-acetylneuraminic acid (NeuNAc) to cytidine 5'-monophosphate N-acetylneuraminic acid (CMP-NeuNAc), a substrate required for the addition of sialic acid. This Oncorhynchus mykiss (Rainbow trout) protein is N-acylneuraminate cytidylyltransferase (cmas).